Reading from the N-terminus, the 91-residue chain is DNA-directed RNA polymerase subunit omega (91 aa).

It belongs to the RNA polymerase subunit omega family. As to quaternary structure, the RNAP catalytic core consists of 2 alpha, 1 beta, 1 beta' and 1 omega subunit. When a sigma factor is associated with the core the holoenzyme is formed, which can initiate transcription.

The catalysed reaction is RNA(n) + a ribonucleoside 5'-triphosphate = RNA(n+1) + diphosphate. Promotes RNA polymerase assembly. Latches the N- and C-terminal regions of the beta' subunit thereby facilitating its interaction with the beta and alpha subunits. This Pseudoalteromonas translucida (strain TAC 125) protein is DNA-directed RNA polymerase subunit omega.